The sequence spans 601 residues: Proteasome-associated ATPase (601 aa).

Residues 1–15 (MSGPRSGSGSGGSTG) are compositionally biased toward gly residues. Residues 1 to 29 (MSGPRSGSGSGGSTGRPGDADSQRSAYEK) form a disordered region. Residues 18–29 (GDADSQRSAYEK) are compositionally biased toward basic and acidic residues. A coiled-coil region spans residues 19–106 (DADSQRSAYE…LKEEVDRLAQ (88 aa)). 289 to 294 (GCGKTL) is a binding site for ATP. The interval 600–601 (YL) is docks into pockets in the proteasome alpha-ring.

It belongs to the AAA ATPase family. In terms of assembly, homohexamer. Assembles into a hexameric ring structure that caps the 20S proteasome core. Strongly interacts with the prokaryotic ubiquitin-like protein Pup through a hydrophobic interface; the interacting region of ARC lies in its N-terminal coiled-coil domain. There is one Pup binding site per ARC hexamer ring. Upon ATP-binding, the C-terminus of ARC interacts with the alpha-rings of the proteasome core, possibly by binding to the intersubunit pockets.

It functions in the pathway protein degradation; proteasomal Pup-dependent pathway. Functionally, ATPase which is responsible for recognizing, binding, unfolding and translocation of pupylated proteins into the bacterial 20S proteasome core particle. May be essential for opening the gate of the 20S proteasome via an interaction with its C-terminus, thereby allowing substrate entry and access to the site of proteolysis. Thus, the C-termini of the proteasomal ATPase may function like a 'key in a lock' to induce gate opening and therefore regulate proteolysis. The protein is Proteasome-associated ATPase of Parafrankia sp. (strain EAN1pec).